The following is a 37-amino-acid chain: Calcitonin gene-related peptide 1 (37 aa).

Cysteines 2 and 7 form a disulfide. Position 37 is a phenylalanine amide (Phe37).

This sequence belongs to the calcitonin family.

It localises to the secreted. CGRP1/CALCA is a peptide hormone that induces vasodilation mediated by the CALCRL-RAMP1 receptor complex. Dilates a variety of vessels including the coronary, cerebral and systemic vasculature. Its abundance in the CNS also points toward a neurotransmitter or neuromodulator role. It also elevates platelet cAMP. CGRP1 can also bind and activate CALCR-RAMP1 (AMYR1) receptor complex. This is Calcitonin gene-related peptide 1 (CALCA) from Ovis aries (Sheep).